A 366-amino-acid chain; its full sequence is MSATRRTIASAGSIVVKIGSSALTSLVGGLDVGRLDALADAIEDRMRAGSDVVVVSSGAVGAGLAPLGLTKRPRDLATKQAAASVGQLALAHAWGTSFARYGRTVGQVLLTADDIARRAQHRNAQRTLDRLRALHAVAIVNENDTVATAELRFGDNDRLAALVAHLVGADALVLLSDVDGLYDGDPRKGNATLIPEVNSPEDLDGVVAGSGGALGTGGMASKLSAARLAADAGVPVLLAAASDAGAALRDAGVGTAFVARPSRLSARKFWVRHAADEQGILHIDEGAVRAVVTKRRSLLPAGISAVSGRFYGGDVVSLLGPDERPVARGVVAYDSAEISDILGKSTQELPAEMQRPVVHADDLVPL.

K17 contacts ATP. Positions 57, 144, and 156 each coordinate substrate. Residues 176–177 and 216–222 each bind ATP; these read SD and TGGMASK. Residues 278-352 form the PUA domain; the sequence is QGILHIDEGA…GKSTQELPAE (75 aa).

It belongs to the glutamate 5-kinase family.

Its subcellular location is the cytoplasm. It catalyses the reaction L-glutamate + ATP = L-glutamyl 5-phosphate + ADP. Its pathway is amino-acid biosynthesis; L-proline biosynthesis; L-glutamate 5-semialdehyde from L-glutamate: step 1/2. Catalyzes the transfer of a phosphate group to glutamate to form L-glutamate 5-phosphate. This is Glutamate 5-kinase from Rhodococcus jostii (strain RHA1).